A 311-amino-acid polypeptide reads, in one-letter code: HPr kinase/phosphorylase (311 aa).

Active-site residues include H136 and K157. 151-158 (GDSGIGKS) serves as a coordination point for ATP. S158 is a Mg(2+) binding site. The Proton acceptor; for phosphorylation activity. Proton donor; for dephosphorylation activity role is filled by D175. Positions 199-208 (LEIRGLGIIN) are important for the catalytic mechanism of both phosphorylation and dephosphorylation. E200 contacts Mg(2+). Residue R241 is part of the active site. Positions 262–267 (PVRPGR) are important for the catalytic mechanism of dephosphorylation.

The protein belongs to the HPrK/P family. In terms of assembly, homohexamer. Mg(2+) is required as a cofactor.

It catalyses the reaction [HPr protein]-L-serine + ATP = [HPr protein]-O-phospho-L-serine + ADP + H(+). It carries out the reaction [HPr protein]-O-phospho-L-serine + phosphate + H(+) = [HPr protein]-L-serine + diphosphate. Catalyzes the ATP- as well as the pyrophosphate-dependent phosphorylation of a specific serine residue in HPr, a phosphocarrier protein of the phosphoenolpyruvate-dependent sugar phosphotransferase system (PTS). HprK/P also catalyzes the pyrophosphate-producing, inorganic phosphate-dependent dephosphorylation (phosphorolysis) of seryl-phosphorylated HPr (P-Ser-HPr). The two antagonistic activities of HprK/P are regulated by several intracellular metabolites, which change their concentration in response to the absence or presence of rapidly metabolisable carbon sources (glucose, fructose, etc.) in the growth medium. Therefore, by controlling the phosphorylation state of HPr, HPrK/P is a sensor enzyme that plays a major role in the regulation of carbon metabolism and sugar transport: it mediates carbon catabolite repression (CCR), and regulates PTS-catalyzed carbohydrate uptake and inducer exclusion. The polypeptide is HPr kinase/phosphorylase (Staphylococcus haemolyticus (strain JCSC1435)).